A 520-amino-acid chain; its full sequence is Bifunctional purine biosynthesis protein PurH (520 aa).

Residues 1–150 (MSDDRKAIKR…KNHPSVAVVV (150 aa)) form the MGS-like domain.

The protein belongs to the PurH family.

It catalyses the reaction (6R)-10-formyltetrahydrofolate + 5-amino-1-(5-phospho-beta-D-ribosyl)imidazole-4-carboxamide = 5-formamido-1-(5-phospho-D-ribosyl)imidazole-4-carboxamide + (6S)-5,6,7,8-tetrahydrofolate. It carries out the reaction IMP + H2O = 5-formamido-1-(5-phospho-D-ribosyl)imidazole-4-carboxamide. The protein operates within purine metabolism; IMP biosynthesis via de novo pathway; 5-formamido-1-(5-phospho-D-ribosyl)imidazole-4-carboxamide from 5-amino-1-(5-phospho-D-ribosyl)imidazole-4-carboxamide (10-formyl THF route): step 1/1. It participates in purine metabolism; IMP biosynthesis via de novo pathway; IMP from 5-formamido-1-(5-phospho-D-ribosyl)imidazole-4-carboxamide: step 1/1. This chain is Bifunctional purine biosynthesis protein PurH, found in Corynebacterium glutamicum (strain R).